Here is a 238-residue protein sequence, read N- to C-terminus: Cysteine-rich venom protein pseudechetoxin (238 aa).

An N-terminal signal peptide occupies residues 1–19 (MIAFIVLLSLAAVLQQSSG). The propeptide occupies 20–27 (TADFASES). Positions 38–164 (VDKHNALRRS…SSKYLYVCQY (127 aa)) constitute an SCP domain. Zn(2+)-binding residues include Thr-51 and Ser-106. Intrachain disulfides connect Cys-75–Cys-153, Cys-92–Cys-165, Cys-148–Cys-162, Cys-184–Cys-191, Cys-187–Cys-196, Cys-200–Cys-233, Cys-209–Cys-227, and Cys-218–Cys-231. Residues 200–233 (CKRNNDFSNCKSLAKKSKCQTEWIKKKCPASCFC) form the ShKT domain.

As to expression, expressed by the venom gland.

The protein localises to the secreted. Functionally, blocks olfactory (CNGA2) and retinal (CNGA1) cyclic nucleotide-gated (CNG) ion channel currents. Does not inhibit retinal (CNGA3) currents. It forms high-affinity contacts with the pore turret region and most likely inhibits CNG channel current by blocking the external entrance to the transmembrane pore. Is really more potent that Pseudecin. Does not affect neither depolarization- nor caffeine-induced contraction arterial smooth muscle. This is Cysteine-rich venom protein pseudechetoxin from Pseudechis australis (Mulga snake).